The following is a 563-amino-acid chain: Eukaryotic translation initiation factor 3 subunit D (563 aa).

Residues 95 to 136 (PGYMRNRNRFNQRGGYRRDNRGGRFQGQGGNMGMQNLSRGRD) form a disordered region. Residues 294–308 (EFDLLTVGETANDLN) form an RNA gate region. The tract at residues 528-563 (IPNSTFETDEEDDDDDEDDVENDDGDDEKDEGDGED) is disordered. A compositionally biased stretch (acidic residues) spans 534–563 (ETDEEDDDDDEDDVENDDGDDEKDEGDGED).

Belongs to the eIF-3 subunit D family. Component of the eukaryotic translation initiation factor 3 (eIF-3) complex.

Its subcellular location is the cytoplasm. In terms of biological role, mRNA cap-binding component of the eukaryotic translation initiation factor 3 (eIF-3) complex, which is involved in protein synthesis of a specialized repertoire of mRNAs and, together with other initiation factors, stimulates binding of mRNA and methionyl-tRNAi to the 40S ribosome. The eIF-3 complex specifically targets and initiates translation of a subset of mRNAs involved in cell proliferation. In the eIF-3 complex, eif3d specifically recognizes and binds the 7-methylguanosine cap of a subset of mRNAs. The sequence is that of Eukaryotic translation initiation factor 3 subunit D from Nematostella vectensis (Starlet sea anemone).